We begin with the raw amino-acid sequence, 670 residues long: Protein HBS1 (670 aa).

Disordered stretches follow at residues 60–88 and 164–202; these read KDIQEEEADEDEDEDAAFAKARRDSESFQ and KTVSKTVPTPPPKISLKEPRRGFEIPSPKVPSSPVVSGR. Residues 63 to 75 are compositionally biased toward acidic residues; it reads QEEEADEDEDEDA. The span at 189 to 200 shows a compositional bias: low complexity; sequence PSPKVPSSPVVS. Residues 245–468 form the tr-type G domain; the sequence is KSHIHMIVIG…DVIENFKIPE (224 aa). Residues 254–261 form a G1 region; that stretch reads GHVDAGKS. 254 to 261 is a binding site for GTP; the sequence is GHVDAGKS. The interval 310 to 314 is G2; it reads GITMD. The interval 331 to 334 is G3; that stretch reads DAPG. Residues 393 to 396 and 432 to 434 each bind GTP; these read NKLD and SGL. The tract at residues 393 to 396 is G4; it reads NKLD. Residues 432 to 434 form a G5 region; that stretch reads SGL.

It belongs to the TRAFAC class translation factor GTPase superfamily. Classic translation factor GTPase family. In terms of assembly, component of the Pelota-HBS1L complex, also named Dom34-Hbs1 complex, composed of pelo and HBS1. As to expression, expressed in ovaries (at protein level).

Its subcellular location is the cytoplasm. It catalyses the reaction GTP + H2O = GDP + phosphate + H(+). Functionally, GTPase component of the Pelota-HBS1L complex, a complex that recognizes stalled ribosomes and triggers the No-Go Decay (NGD) pathway. The Pelota-HBS1L complex recognizes ribosomes stalled at the 3' end of an mRNA and engages stalled ribosomes by destabilizing mRNA in the mRNA channel. Following ribosome-binding, the Pelota-HBS1L complex promotes recruitment of pix, which drives the disassembly of stalled ribosomes, followed by degradation of damaged mRNAs as part of the NGD pathway. Together with pelo, required for transposon silencing in the ovary and testis. Together with pelo, promotes meiosis and spermatid individualization during spermatogenesis. The sequence is that of Protein HBS1 from Drosophila melanogaster (Fruit fly).